We begin with the raw amino-acid sequence, 483 residues long: FAD-linked oxidoreductase easE (483 aa).

Residues 10 to 193 (QGRLPLYSAV…TEATVRVFSD (184 aa)) form the FAD-binding PCMH-type domain.

This sequence belongs to the oxygen-dependent FAD-linked oxidoreductase family. Requires FAD as cofactor.

Its pathway is alkaloid biosynthesis; ergot alkaloid biosynthesis. Its function is as follows. FAD-linked oxidoreductase; part of the gene cluster that mediates the biosynthesis of fungal ergot alkaloid. DmaW catalyzes the first step of ergot alkaloid biosynthesis by condensing dimethylallyl diphosphate (DMAP) and tryptophan to form 4-dimethylallyl-L-tryptophan. The second step is catalyzed by the methyltransferase easF that methylates 4-dimethylallyl-L-tryptophan in the presence of S-adenosyl-L-methionine, resulting in the formation of 4-dimethylallyl-L-abrine. The catalase easC and the FAD-dependent oxidoreductase easE then transform 4-dimethylallyl-L-abrine to chanoclavine-I which is further oxidized by easD in the presence of NAD(+), resulting in the formation of chanoclavine-I aldehyde. Agroclavine dehydrogenase easG then mediates the conversion of chanoclavine-I aldehyde to agroclavine via a non-enzymatic adduct reaction: the substrate is an iminium intermediate that is formed spontaneously from chanoclavine-I aldehyde in the presence of glutathione. The presence of easA is not required to complete this reaction. Further conversion of agroclavine to paspalic acid is a two-step process involving oxidation of agroclavine to elymoclavine and of elymoclavine to paspalic acid, the second step being performed by the elymoclavine oxidase cloA. Paspalic acid is then further converted to D-lysergic acid. Ergopeptines are assembled from D-lysergic acid and three different amino acids by the D-lysergyl-peptide-synthetases composed each of a monomudular and a trimodular nonribosomal peptide synthetase subunit. LpsB and lpsC encode the monomodular subunits responsible for D-lysergic acid activation and incorporation into the ergopeptine backbone. LpsA1 and A2 subunits encode the trimodular nonribosomal peptide synthetase assembling the tripeptide portion of ergopeptines. LpsA1 is responsible for formation of the major ergopeptine, ergotamine, and lpsA2 for alpha-ergocryptine, the minor ergopeptine of the total alkaloid mixture elaborated by C.purpurea. D-lysergyl-tripeptides are assembled by the nonribosomal peptide synthetases and released as N-(D-lysergyl-aminoacyl)-lactams. Cyclolization of the D-lysergyl-tripeptides is performed by the Fe(2+)/2-ketoglutarate-dependent dioxygenase easH which introduces a hydroxyl group into N-(D-lysergyl-aminoacyl)-lactam at alpha-C of the aminoacyl residue followed by spontaneous condensation with the terminal lactam carbonyl group. This chain is FAD-linked oxidoreductase easE, found in Claviceps purpurea (Ergot fungus).